We begin with the raw amino-acid sequence, 682 residues long: MNTFFRLTALAGLLALAGQSFAVEDITRADQIPVLKEETQHATVSERVTSRFTRSHYRQFDLDEAFSAKIFDRYLNLLDYSHNVLLASDVEQFAKKKTVLGDELRTGKLDVFYDLYNLAQKRRFERYQYALKVLERPMDFTGNDTFNLDRSKAPWPKDEAELNALWDGKVKFDELSLKLTGKSDKEIRETLTRRYKFAIRRLAQTNSEDVFSLAMTAFAREIDPHTNYLSPRNTEQFNTEMSLSLEGIGAVLQMDDDYTVINSLVAGGPAAKSKSISVGDRIVGVGQAGKPMVDVIGWRLDDVVALIKGPKGSKVRLEILPAGKGTKTRIITLTRERIRLEDRAVKMSVKTVGKEKVGVLDIPGFYVGLTDDVKVQLQKLEKQNVNSIVIDLRSNGGGALTEAVSLSGLFIPSGPIVQVRDNNGKVREDSDTDGVVYYKGPLVVLVDRFSASASEIFAAAMQDYGRALIVGEPTFGKGTVQQYRSLNRIYDQMLRPEWPALGSVQYTIQKFYRVNGGSTQRKGVTPDIIMPTGNEETETGEKFEDNALPWDSIDAAKYVKSDDLAPFGPELLKEHNARIAKDPEFQYIMKDIARFNAMKDKRNIVSLNYAQREKENNEEDALRLARINDRFKREGKPLLKKLDDLPKDYQEPDPYLDETVKIALDLAHLEKEKPAEQAAANK.

A signal peptide spans 1–22 (MNTFFRLTALAGLLALAGQSFA). The PDZ domain maps to 238 to 322 (NTEMSLSLEG…SKVRLEILPA (85 aa)). Catalysis depends on charge relay system residues Ser-452, Asp-463, and Lys-477.

This sequence belongs to the peptidase S41A family.

The protein localises to the cell inner membrane. The catalysed reaction is The enzyme shows specific recognition of a C-terminal tripeptide, Xaa-Yaa-Zaa, in which Xaa is preferably Ala or Leu, Yaa is preferably Ala or Tyr, and Zaa is preferably Ala, but then cleaves at a variable distance from the C-terminus. A typical cleavage is -Ala-Ala-|-Arg-Ala-Ala-Lys-Glu-Asn-Tyr-Ala-Leu-Ala-Ala.. Functionally, involved in the cleavage of a C-terminal peptide of 11 residues from the precursor form of penicillin-binding protein 3 (PBP3). May be involved in protection of the bacterium from thermal and osmotic stresses. This is Tail-specific protease (prc) from Salmonella typhimurium (strain LT2 / SGSC1412 / ATCC 700720).